The sequence spans 392 residues: Cyclic di-GMP phosphodiesterase RocR (392 aa).

The Response regulatory domain occupies 5–126; that stretch reads NVLVLEDEPF…RITALLTRYN (122 aa). The residue at position 56 (D56) is a 4-aspartylphosphate. An EAL domain is found at 140–392; it reads ELPSVADVVR…QHFLDYCSGS (253 aa). 4 residues coordinate Mg(2+): E175, N233, E265, and D295. E352 serves as the catalytic Proton acceptor.

As to quaternary structure, homotetramer. Exhibits a highly unusual tetrameric structure arranged around a single dyad, with the four subunits adopting two distinctly different conformations, with only two active sites accessible for substrate binding. Interacts with RocS1. The cofactor is Mg(2+).

The catalysed reaction is 3',3'-c-di-GMP + H2O = 5'-phosphoguanylyl(3'-&gt;5')guanosine + H(+). Phosphorylation of Asp-56 probably induces local conformational changes in the response regulatory domain. These structural changes are transmitted to the adjacent EAL domain, then the signal is further transmitted down to the active site. The phosphodiesterase activity is inhibited by Ca(2+) and Zn(2+). Phosphodiesterase activity is inhibited by a benzoisothiazolinone derivative that specifically inhibited RocR, but not some other phosphodiesterases. Phosphodiesterase (PDE) that catalyzes the hydrolysis of cyclic diguanylate (c-di-GMP) to 5'-pGpG. Cannot use cyclic AMP or cyclic GMP. Part of the RocSAR two-component regulatory signaling system (also known as the SadARS system), which regulates biofilm maturation, type III secretion and expression of the cup fimbrial-gene cluster. Negatively regulates the expression of cup genes by antagonizing the activity of RocA1. The protein is Cyclic di-GMP phosphodiesterase RocR of Pseudomonas aeruginosa (strain ATCC 15692 / DSM 22644 / CIP 104116 / JCM 14847 / LMG 12228 / 1C / PRS 101 / PAO1).